A 499-amino-acid chain; its full sequence is Lysine--tRNA ligase (499 aa).

Mg(2+) contacts are provided by E408 and E415.

Belongs to the class-II aminoacyl-tRNA synthetase family. As to quaternary structure, homodimer. The cofactor is Mg(2+).

It localises to the cytoplasm. It carries out the reaction tRNA(Lys) + L-lysine + ATP = L-lysyl-tRNA(Lys) + AMP + diphosphate. In Thermoanaerobacter pseudethanolicus (strain ATCC 33223 / 39E) (Clostridium thermohydrosulfuricum), this protein is Lysine--tRNA ligase.